Reading from the N-terminus, the 335-residue chain is Serpentine receptor class gamma-11 (335 aa).

The next 7 membrane-spanning stretches (helical) occupy residues 33-53 (FLQI…LYTI), 66-86 (FFLI…LDII), 98-118 (PIIA…MIVL), 154-174 (LKYL…NLII), 202-222 (FQLI…SVIF), 242-262 (GTAY…LFAF), and 271-291 (TIFG…PIIM).

The protein belongs to the nematode receptor-like protein srg family.

It is found in the membrane. The protein is Serpentine receptor class gamma-11 (srg-11) of Caenorhabditis elegans.